The chain runs to 287 residues: Proteasome subunit alpha (287 aa).

A disordered region spans residues glycine 241–threonine 287. A compositionally biased stretch (low complexity) spans alanine 262–glycine 275. Residues glycine 276–threonine 287 show a composition bias toward gly residues.

The protein belongs to the peptidase T1A family. As to quaternary structure, the 20S proteasome core is composed of 14 alpha and 14 beta subunits that assemble into four stacked heptameric rings, resulting in a barrel-shaped structure. The two inner rings, each composed of seven catalytic beta subunits, are sandwiched by two outer rings, each composed of seven alpha subunits. The catalytic chamber with the active sites is on the inside of the barrel. Has a gated structure, the ends of the cylinder being occluded by the N-termini of the alpha-subunits. Is capped by the proteasome-associated ATPase, ARC.

The protein localises to the cytoplasm. The protein operates within protein degradation; proteasomal Pup-dependent pathway. The formation of the proteasomal ATPase ARC-20S proteasome complex, likely via the docking of the C-termini of ARC into the intersubunit pockets in the alpha-rings, may trigger opening of the gate for substrate entry. Interconversion between the open-gate and close-gate conformations leads to a dynamic regulation of the 20S proteasome proteolysis activity. Functionally, component of the proteasome core, a large protease complex with broad specificity involved in protein degradation. The chain is Proteasome subunit alpha from Geodermatophilus obscurus (strain ATCC 25078 / DSM 43160 / JCM 3152 / CCUG 61914 / KCC A-0152 / KCTC 9177 / NBRC 13315 / NRRL B-3577 / G-20).